We begin with the raw amino-acid sequence, 570 residues long: Adenine deaminase (570 aa).

This sequence belongs to the metallo-dependent hydrolases superfamily. Adenine deaminase family. The cofactor is Mn(2+).

The catalysed reaction is adenine + H2O + H(+) = hypoxanthine + NH4(+). The protein is Adenine deaminase of Oleidesulfovibrio alaskensis (strain ATCC BAA-1058 / DSM 17464 / G20) (Desulfovibrio alaskensis).